The chain runs to 302 residues: Sulfate adenylyltransferase subunit 2 (302 aa).

Residues 280-302 are disordered; it reads RQGRAIDHDQSGSMELKKRQGYF.

This sequence belongs to the PAPS reductase family. CysD subfamily. In terms of assembly, heterodimer composed of CysD, the smaller subunit, and CysN.

It carries out the reaction sulfate + ATP + H(+) = adenosine 5'-phosphosulfate + diphosphate. It participates in sulfur metabolism; hydrogen sulfide biosynthesis; sulfite from sulfate: step 1/3. With CysN forms the ATP sulfurylase (ATPS) that catalyzes the adenylation of sulfate producing adenosine 5'-phosphosulfate (APS) and diphosphate, the first enzymatic step in sulfur assimilation pathway. APS synthesis involves the formation of a high-energy phosphoric-sulfuric acid anhydride bond driven by GTP hydrolysis by CysN coupled to ATP hydrolysis by CysD. The chain is Sulfate adenylyltransferase subunit 2 from Vibrio cholerae serotype O1 (strain ATCC 39315 / El Tor Inaba N16961).